We begin with the raw amino-acid sequence, 182 residues long: ATP-dependent protease subunit HslV (182 aa).

The active site involves threonine 12. Residues alanine 167, cysteine 170, and threonine 173 each contribute to the Na(+) site.

The protein belongs to the peptidase T1B family. HslV subfamily. As to quaternary structure, a double ring-shaped homohexamer of HslV is capped on each side by a ring-shaped HslU homohexamer. The assembly of the HslU/HslV complex is dependent on binding of ATP.

It is found in the cytoplasm. The catalysed reaction is ATP-dependent cleavage of peptide bonds with broad specificity.. With respect to regulation, allosterically activated by HslU binding. Functionally, protease subunit of a proteasome-like degradation complex believed to be a general protein degrading machinery. The polypeptide is ATP-dependent protease subunit HslV (Chlorobium phaeobacteroides (strain DSM 266 / SMG 266 / 2430)).